A 301-amino-acid polypeptide reads, in one-letter code: Ribonuclease HIII (301 aa).

The region spanning 84-301 is the RNase H type-2 domain; the sequence is ASAIGSDEVG…TEKAARIAKK (218 aa). Residues Asp90, Glu91, and Asp195 each coordinate a divalent metal cation.

This sequence belongs to the RNase HII family. RnhC subfamily. The cofactor is Mn(2+). Requires Mg(2+) as cofactor.

The protein resides in the cytoplasm. It catalyses the reaction Endonucleolytic cleavage to 5'-phosphomonoester.. Functionally, endonuclease that specifically degrades the RNA of RNA-DNA hybrids. In Geobacillus sp. (strain WCH70), this protein is Ribonuclease HIII.